The sequence spans 105 residues: Phosphoribosyl-AMP cyclohydrolase (105 aa).

Asp72 contributes to the Mg(2+) binding site. Cys73 is a binding site for Zn(2+). Mg(2+)-binding residues include Asp74 and Asp76. Residues Cys89 and Cys96 each contribute to the Zn(2+) site.

This sequence belongs to the PRA-CH family. As to quaternary structure, homodimer. It depends on Mg(2+) as a cofactor. Zn(2+) is required as a cofactor.

The protein localises to the cytoplasm. The enzyme catalyses 1-(5-phospho-beta-D-ribosyl)-5'-AMP + H2O = 1-(5-phospho-beta-D-ribosyl)-5-[(5-phospho-beta-D-ribosylamino)methylideneamino]imidazole-4-carboxamide. It functions in the pathway amino-acid biosynthesis; L-histidine biosynthesis; L-histidine from 5-phospho-alpha-D-ribose 1-diphosphate: step 3/9. Functionally, catalyzes the hydrolysis of the adenine ring of phosphoribosyl-AMP. This is Phosphoribosyl-AMP cyclohydrolase from Listeria monocytogenes serovar 1/2a (strain ATCC BAA-679 / EGD-e).